Reading from the N-terminus, the 448-residue chain is Exoglucanase GH7B (448 aa).

Positions 1–17 are cleaved as a signal peptide; the sequence is MSLAVVFLLGFLAVSHG. Pyrrolidone carboxylic acid is present on Gln18. 2 cysteine pairs are disulfide-bonded: Cys62–Cys83 and Cys73–Cys79. Substrate is bound by residues Tyr97, 119–120, and Lys197; that span reads DI. 6 disulfides stabilise this stretch: Cys154-Cys415, Cys188-Cys226, Cys192-Cys225, Cys246-Cys271, Cys254-Cys259, and Cys276-Cys350. Glu228 serves as the catalytic Nucleophile. Substrate-binding positions include 230–233 and His244; that span reads DIWE. Glu233 serves as the catalytic Proton donor/acceptor. Residues Arg266 and Asp274 each coordinate substrate. 2 residues coordinate substrate: Trp396 and Arg412.

The protein belongs to the glycosyl hydrolase 7 (cellulase C) family. In terms of assembly, monomer. In terms of tissue distribution, highly expressed in the hepatopancreas (at protein level). Little or no expression detected in the hindgut or the rest of the body (at protein level).

Its subcellular location is the secreted. The catalysed reaction is Hydrolysis of (1-&gt;4)-beta-D-glucosidic linkages in cellulose and cellotetraose, releasing cellobiose from the non-reducing ends of the chains.. Its function is as follows. Exocellobiohydrolase (CBH) that catalyzes the hydrolysis of 1,4-beta-D-glucosidic bonds in cellulose to release the disaccharide cellobiose. The degradation of cellulose involves an interplay between different cellulolytic enzymes. Hydrolysis starts with endoglucanases (EGs), which cut internal beta-1,4-glucosidic bonds in cellulose to reduce the polymerization degree of the substrate and create new chain ends for exocellobiohydrolases (CBHs). The CBHs release the disaccharide cellobiose from the non-reducing end of the cellulose polymer chain. Finally, beta-1,4-glucosidases hydrolyze the cellobiose and other short cello-oligosaccharides into glucose units. This is Exoglucanase GH7B from Limnoria quadripunctata (Gribble).